A 147-amino-acid polypeptide reads, in one-letter code: UPF0306 protein KPN78578_35330 (147 aa).

This sequence belongs to the UPF0306 family.

The protein is UPF0306 protein KPN78578_35330 of Klebsiella pneumoniae subsp. pneumoniae (strain ATCC 700721 / MGH 78578).